The chain runs to 247 residues: tRNA pseudouridine synthase A 1 (247 aa).

Asp-53 serves as the catalytic Nucleophile. Residue Tyr-111 coordinates substrate.

This sequence belongs to the tRNA pseudouridine synthase TruA family. In terms of assembly, homodimer.

It carries out the reaction uridine(38/39/40) in tRNA = pseudouridine(38/39/40) in tRNA. Formation of pseudouridine at positions 38, 39 and 40 in the anticodon stem and loop of transfer RNAs. The sequence is that of tRNA pseudouridine synthase A 1 from Bacillus cereus (strain ATCC 14579 / DSM 31 / CCUG 7414 / JCM 2152 / NBRC 15305 / NCIMB 9373 / NCTC 2599 / NRRL B-3711).